Consider the following 352-residue polypeptide: Photosystem II D2 protein (352 aa).

Residue Thr2 is modified to N-acetylthreonine. Thr2 is modified (phosphothreonine). A helical transmembrane segment spans residues 40 to 60 (CAYFAVGGWLTGTTFVTSWYT). His117 contacts chlorophyll a. Residues 124–140 (GFMLRQFEIARAIGLRP) form a helical membrane-spanning segment. Residues Gln129 and Asn142 each contribute to the pheophytin a site. Residues 152 to 165 (VFVSVFLIYPLGQS) form a helical membrane-spanning segment. His197 serves as a coordination point for chlorophyll a. The chain crosses the membrane as a helical span at residues 207–227 (AALLCAIHGATVENTLFEDGD). His214 and Phe261 together coordinate a plastoquinone. Fe cation is bound at residue His214. His268 contacts Fe cation. The chain crosses the membrane as a helical span at residues 278-294 (GLWMSAIGVVGLALNLR).

Belongs to the reaction center PufL/M/PsbA/D family. PSII is composed of 1 copy each of membrane proteins PsbA, PsbB, PsbC, PsbD, PsbE, PsbF, PsbH, PsbI, PsbJ, PsbK, PsbL, PsbM, PsbT, PsbX, PsbY, PsbZ, Psb30/Ycf12, at least 3 peripheral proteins of the oxygen-evolving complex and a large number of cofactors. It forms dimeric complexes. The cofactor is The D1/D2 heterodimer binds P680, chlorophylls that are the primary electron donor of PSII, and subsequent electron acceptors. It shares a non-heme iron and each subunit binds pheophytin, quinone, additional chlorophylls, carotenoids and lipids. There is also a Cl(-1) ion associated with D1 and D2, which is required for oxygen evolution. The PSII complex binds additional chlorophylls, carotenoids and specific lipids..

Its subcellular location is the plastid. The protein localises to the chloroplast thylakoid membrane. It catalyses the reaction 2 a plastoquinone + 4 hnu + 2 H2O = 2 a plastoquinol + O2. Functionally, photosystem II (PSII) is a light-driven water:plastoquinone oxidoreductase that uses light energy to abstract electrons from H(2)O, generating O(2) and a proton gradient subsequently used for ATP formation. It consists of a core antenna complex that captures photons, and an electron transfer chain that converts photonic excitation into a charge separation. The D1/D2 (PsbA/PsbD) reaction center heterodimer binds P680, the primary electron donor of PSII as well as several subsequent electron acceptors. D2 is needed for assembly of a stable PSII complex. The chain is Photosystem II D2 protein from Nephroselmis olivacea (Green alga).